A 154-amino-acid chain; its full sequence is PTS system glucose-specific EIIA component (154 aa).

In terms of domain architecture, PTS EIIA type-1 spans 26-130 (DEVFKERMLG…SIKSPIIFTN (105 aa)). Residues H63 and H78 each coordinate Zn(2+). H78 serves as the catalytic Tele-phosphohistidine intermediate; for EIIA activity. At H78 the chain carries Phosphohistidine; by HPr.

Heterodimer with glycerol kinase (glpk). Zn(2+) is required as a cofactor.

It localises to the cytoplasm. Functionally, the phosphoenolpyruvate-dependent sugar phosphotransferase system (sugar PTS), a major carbohydrate active transport system, catalyzes the phosphorylation of incoming sugar substrates concomitantly with their translocation across the cell membrane. The enzyme II complex composed of PtsG and Crr is involved in glucose transport. This Mycoplasma capricolum subsp. capricolum (strain California kid / ATCC 27343 / NCTC 10154) protein is PTS system glucose-specific EIIA component (crr).